The chain runs to 130 residues: Ornithine decarboxylase antizyme (130 aa).

Residues 1-14 (SDVPVHHRTDHDRA) are compositionally biased toward basic and acidic residues. Residues 1-56 (SDVPVHHRTDHDRASLLTGSSRKSSVDSAGGSLFEASSRASSPSSSSSSECSDTES) form a disordered region. Residues 17-27 (LTGSSRKSSVD) show a composition bias toward polar residues. Residues 32–51 (SLFEASSRASSPSSSSSSEC) show a composition bias toward low complexity.

Belongs to the ODC antizyme family. In terms of assembly, interacts with ODC1 and thereby sterically blocks ODC homodimerization.

Its function is as follows. Ornithine decarboxylase (ODC) antizyme protein that negatively regulates ODC activity and intracellular polyamine biosynthesis and uptake in response to increased intracellular polyamine levels. Binds to ODC monomers, inhibiting the assembly of the functional ODC homodimer, and targets the monomers for ubiquitin-independent proteolytic destruction by the 26S proteasome. This chain is Ornithine decarboxylase antizyme (Oda), found in Drosophila virilis (Fruit fly).